Here is a 284-residue protein sequence, read N- to C-terminus: Asialoglycoprotein receptor 1 (284 aa).

Residues 1–39 lie on the Cytoplasmic side of the membrane; it reads MTKDYQDFQHLDNENDHHQLQRGPPPAPRLLQRLCSGFR. The short motif at 5–8 is the Endocytosis signal element; that stretch reads YQDF. Cysteine 35 carries the S-palmitoyl cysteine lipid modification. Residues 40 to 60 form a helical; Signal-anchor for type II membrane protein membrane-spanning segment; that stretch reads LFLLSLGLSILLLVVVCVITS. The stretch at 58 to 122 forms a coiled coil; sequence ITSQNSQLRE…EDLREDHSRL (65 aa). Topologically, residues 61–284 are extracellular; sequence QNSQLREDLR…VCETELGKAN (224 aa). 3 N-linked (GlcNAc...) asparagine glycosylation sites follow: asparagine 75, asparagine 78, and asparagine 146. 3 disulfide bridges follow: cysteine 153–cysteine 164, cysteine 181–cysteine 276, and cysteine 254–cysteine 268. A C-type lectin domain is found at 160-277; sequence YEGSCYWFSS…CRRPYRWVCE (118 aa). Residues valine 190, glutamate 196, aspartate 215, glutamine 239, aspartate 241, aspartate 242, glutamate 252, aspartate 253, asparagine 264, aspartate 265, and glutamate 277 each contribute to the Ca(2+) site.

As to quaternary structure, interacts with LASS2. Phosphorylated on a cytoplasmic Ser residue. As to expression, expressed exclusively in hepatic parenchymal cells.

It localises to the membrane. Mediates the endocytosis of plasma glycoproteins to which the terminal sialic acid residue on their complex carbohydrate moieties has been removed. The receptor recognizes terminal galactose and N-acetylgalactosamine units. After ligand binding to the receptor, the resulting complex is internalized and transported to a sorting organelle, where receptor and ligand are disassociated. The receptor then returns to the cell membrane surface. The polypeptide is Asialoglycoprotein receptor 1 (Asgr1) (Rattus norvegicus (Rat)).